The chain runs to 336 residues: Small ribosomal subunit protein uS2 (336 aa).

The protein belongs to the universal ribosomal protein uS2 family.

This chain is Small ribosomal subunit protein uS2, found in Beijerinckia indica subsp. indica (strain ATCC 9039 / DSM 1715 / NCIMB 8712).